A 538-amino-acid chain; its full sequence is Efflux pump radE (538 aa).

Composition is skewed to basic and acidic residues over residues M1 to P12, E20 to H35, and D65 to N74. 2 disordered regions span residues M1–H35 and D65–W90. The next 12 membrane-spanning stretches (helical) occupy residues A100–I120, L134–A154, V163–S183, F194–L214, S225–L245, W253–L273, P327–I347, E362–V382, I409–T429, W436–S456, I482–W502, and S505–G525.

It belongs to the major facilitator superfamily.

It localises to the cell membrane. Efflux pump that might be required for efficient secretion of radicicol or other secondary metabolies produced by the radicicol gene cluster. This Floropilus chiversii (Chaetomium chiversii) protein is Efflux pump radE.